Consider the following 923-residue polypeptide: MAGVDSGKLIGSEIHGFHTLQDLDIQTMLDEAYSRWLRPNEIHALLCNHKFFTINVKPVNLPKSGTIVLFDRKMLRNFRKDGHNWKKKKDGKTIKEAHEHLKVGNEERIHVYYAHGEDTPTFVRRCYWLLDKSQEHIVLVHYRETHEVHAAPATPGNSYSSSITDHLSPKIVAEDTSSGVHNTCNTGFEVRSNSLGSRNHEIRLHEINTLDWDELLVPADISNQSHPTEEDMLYFTEQLQTAPRGSVKQGNHLAGYNGSVDIPSFPGLEDPVYQNNNSCGAGEFSSQHSHCGVDPNLQRRDFSATVTDQPGDALLNNGYGSQDSFGRWVNNFISDSPGSVDDPSLEAVYTPGQDSSTPPTVFHSHSDIPEQVFNITDVSPAWAYSTEKTKILVTGFFHDSFQHLGRSNLICICGELRVPAEFLQMGVYRCFLPPQSPGVVNLYLSVDGNKPISQLFSFEHRSVQFIEKAIPQDDQLYKWEEFEFQVRLAHLLFTSSNKISVLTSKISPENLLEAKKLASRTSHLLNSWAYLMKSIQANEVPFDQARDHLFELTLKNRLKEWLLEKVIENRNTKEYDSKGLGVIHLCAVLGYTWSILLFSWANISLDFRDKQGWTALHWAAYYGREKMVAALLSAGARPNLVTDPTKEFLGGCTAADLAQQKGYDGLAAFLAEKCLVAQFKDMQTAGNISGNLETIKAEKSSNPGNANEEEQSLKDTLAAYRTAAEAAARIQGAFREHELKVRSSAVRFASKEEEAKNIIAAMKIQHAFRNFEVRRKIAAAARIQYRFQTWKMRREFLNMRKKAIRIQAAFRGFQVRRQYQKITWSVGVLEKAILRWRLKRKGFRGLQVSQPDEKEGSEAVEDFYKTSQKQAEERLERSVVKVQAMFRSKKAQQDYRRMKLAHEEAQLEYDGMQELDQMATEES.

Residues 25 to 151 constitute a DNA-binding region (CG-1); sequence IQTMLDEAYS…YRETHEVHAA (127 aa). A transcription activation region spans residues 272 to 372; it reads VYQNNNSCGA…HSHSDIPEQV (101 aa). The stretch at 611-640 is one ANK repeat; the sequence is QGWTALHWAAYYGREKMVAALLSAGARPNL. IQ domains follow at residues 757–786, 799–828, and 875–904; these read NIIA…IQYR, MRKK…SVGV, and LERS…AHEE. Positions 824 to 846 are calmodulin-binding; that stretch reads WSVGVLEKAILRWRLKRKGFRGL. Residues 887–914 adopt a coiled-coil conformation; it reads RSKKAQQDYRRMKLAHEEAQLEYDGMQE.

It belongs to the CAMTA family. Expressed in roots, stems, leaves, pollen, top of sepals and siliques.

Its subcellular location is the nucleus. In terms of biological role, transcription activator. Binds to the DNA consensus sequence 5'-[ACG]CGCG[GTC]-3'. Regulates transcriptional activity in response to calcium signals. Binds calmodulin in a calcium-dependent manner. Involved in response to cold. Contributes together with CAMTA3 to the positive regulation of the cold-induced expression of DREB1A/CBF3, DREB1B/CBF1 and DREB1C/CBF2. The sequence is that of Calmodulin-binding transcription activator 5 from Arabidopsis thaliana (Mouse-ear cress).